Consider the following 338-residue polypeptide: Ketol-acid reductoisomerase (NADP(+)) (338 aa).

Residues 1–181 (MQIFYDKDCD…GGGRTGIIET (181 aa)) enclose the KARI N-terminal Rossmann domain. Residues 24–27 (YGSQ), arginine 47, serine 50, serine 52, and 82–85 (DEFQ) contribute to the NADP(+) site. Histidine 107 is a catalytic residue. Position 133 (glycine 133) interacts with NADP(+). The KARI C-terminal knotted domain occupies 182–327 (SFREETETDL…SKLRAMMPWI (146 aa)). Aspartate 190, glutamate 194, glutamate 226, and glutamate 230 together coordinate Mg(2+). Serine 251 serves as a coordination point for substrate.

This sequence belongs to the ketol-acid reductoisomerase family. Mg(2+) is required as a cofactor.

It catalyses the reaction (2R)-2,3-dihydroxy-3-methylbutanoate + NADP(+) = (2S)-2-acetolactate + NADPH + H(+). It carries out the reaction (2R,3R)-2,3-dihydroxy-3-methylpentanoate + NADP(+) = (S)-2-ethyl-2-hydroxy-3-oxobutanoate + NADPH + H(+). The protein operates within amino-acid biosynthesis; L-isoleucine biosynthesis; L-isoleucine from 2-oxobutanoate: step 2/4. It functions in the pathway amino-acid biosynthesis; L-valine biosynthesis; L-valine from pyruvate: step 2/4. Functionally, involved in the biosynthesis of branched-chain amino acids (BCAA). Catalyzes an alkyl-migration followed by a ketol-acid reduction of (S)-2-acetolactate (S2AL) to yield (R)-2,3-dihydroxy-isovalerate. In the isomerase reaction, S2AL is rearranged via a Mg-dependent methyl migration to produce 3-hydroxy-3-methyl-2-ketobutyrate (HMKB). In the reductase reaction, this 2-ketoacid undergoes a metal-dependent reduction by NADPH to yield (R)-2,3-dihydroxy-isovalerate. In Acinetobacter baylyi (strain ATCC 33305 / BD413 / ADP1), this protein is Ketol-acid reductoisomerase (NADP(+)).